Reading from the N-terminus, the 311-residue chain is Aspartate carbamoyltransferase catalytic subunit (311 aa).

Positions 55 and 56 each coordinate carbamoyl phosphate. Lysine 85 contributes to the L-aspartate binding site. Carbamoyl phosphate contacts are provided by arginine 106, histidine 135, and glutamine 138. The L-aspartate site is built by arginine 168 and arginine 230. The carbamoyl phosphate site is built by leucine 268 and proline 269.

Belongs to the aspartate/ornithine carbamoyltransferase superfamily. ATCase family. As to quaternary structure, heterododecamer (2C3:3R2) of six catalytic PyrB chains organized as two trimers (C3), and six regulatory PyrI chains organized as three dimers (R2).

It catalyses the reaction carbamoyl phosphate + L-aspartate = N-carbamoyl-L-aspartate + phosphate + H(+). Its pathway is pyrimidine metabolism; UMP biosynthesis via de novo pathway; (S)-dihydroorotate from bicarbonate: step 2/3. Functionally, catalyzes the condensation of carbamoyl phosphate and aspartate to form carbamoyl aspartate and inorganic phosphate, the committed step in the de novo pyrimidine nucleotide biosynthesis pathway. This chain is Aspartate carbamoyltransferase catalytic subunit, found in Escherichia coli O139:H28 (strain E24377A / ETEC).